We begin with the raw amino-acid sequence, 406 residues long: MSKLFVGSEIGQLRRVILHRPERALSHLTPTNCHNLLFDDVLSVEKALHEHDQFVATLRQQDVEVLLLQDLLEETLAHPEAKQWLLRHQISHYRFGPTFANQIRAFLLEKNNKELASILLGGLAFIELPFKAPSMLQQLSDPFDFVIDPLPNHLFTRDTSCWIYGGVSINPMAKAARKRESNHLRAIYKWHPLFSNQSFPRYFGDENRHYDNATIEGGDVLIIGKGNVLVGISERTTPQGIENLAKQLFRTEQAKQVIAIKLPENRSCMHLDTVMTHMDHNVFSVYPRVIDKNMPCWSITPCGDQQLAIQEKPNFEHSLMQALELDSLNIITTGGDSYEAEREQWHDANNVLTIKPGVVVAYERNVYTNEKYDKAGITVLPIMGDELGRGRGGARCMSCPIERDGI.

C396 serves as the catalytic Amidino-cysteine intermediate.

This sequence belongs to the arginine deiminase family.

It is found in the cytoplasm. It carries out the reaction L-arginine + H2O = L-citrulline + NH4(+). It functions in the pathway amino-acid degradation; L-arginine degradation via ADI pathway; carbamoyl phosphate from L-arginine: step 1/2. This chain is Arginine deiminase, found in Aliivibrio salmonicida (strain LFI1238) (Vibrio salmonicida (strain LFI1238)).